The sequence spans 439 residues: Ornithine aminotransferase, mitochondrial (439 aa).

A mitochondrion-targeting transit peptide spans 1–35 (MLSKLASLQTVAALRRGLRTSVASATSVATKKTEQ). Residues K49 and K66 each carry the N6-acetyllysine modification. At K102 the chain carries N6-succinyllysine. K107 carries the N6-acetyllysine; alternate modification. Residue K107 is modified to N6-succinyllysine; alternate. Position 292 is an N6-(pyridoxal phosphate)lysine (K292). K362 carries the post-translational modification N6-acetyllysine; alternate. K362 is subject to N6-succinyllysine; alternate. Residues K386 and K392 each carry the N6-acetyllysine modification. Residue K405 is modified to N6-acetyllysine; alternate. The residue at position 405 (K405) is an N6-succinyllysine; alternate. The residue at position 421 (K421) is an N6-acetyllysine.

Homohexamer. Pyridoxal 5'-phosphate serves as cofactor. As to expression, expressed in the head and flagellum of epididymal sperm but not in testicular sperm (at protein level).

The protein localises to the mitochondrion matrix. It carries out the reaction L-ornithine + 2-oxoglutarate = L-glutamate 5-semialdehyde + L-glutamate. Its pathway is amino-acid biosynthesis; L-proline biosynthesis; L-glutamate 5-semialdehyde from L-ornithine: step 1/1. In terms of biological role, catalyzes the reversible interconversion of L-ornithine and 2-oxoglutarate to L-glutamate semialdehyde and L-glutamate. The polypeptide is Ornithine aminotransferase, mitochondrial (Oat) (Rattus norvegicus (Rat)).